A 114-amino-acid polypeptide reads, in one-letter code: MSWWQDMDQRGGVSSPSGALASAEPAPASVTLAELLHLVQKGQEVPGLEKRHITATHGEPTASLLPRRPKPWEDAGSAASPCTIALDTRTQPPTIEERSRGSPAAQLDGGPRVS.

Disordered regions lie at residues Met-1–Ala-26 and Ile-53–Ser-114. Ser-102 carries the post-translational modification Phosphoserine.

Its subcellular location is the peroxisome. May be a peroxin involved in the PTS2-mediated protein import pathway. The chain is Peroxisomal biogenesis factor 39 (Pex39) from Mus musculus (Mouse).